A 447-amino-acid chain; its full sequence is GTPase Der (447 aa).

EngA-type G domains are found at residues 3–167 (PVIA…ALPE) and 180–353 (IRLA…KSAN). GTP is bound by residues 9–16 (GRPNVGKS), 56–60 (DTGGF), 119–122 (NKAE), 186–193 (GRPNVGKS), 233–237 (DTAGL), and 298–301 (NKWD). The region spanning 354–438 (RKMPTPVLTR…PLRIEMKTSS (85 aa)) is the KH-like domain.

This sequence belongs to the TRAFAC class TrmE-Era-EngA-EngB-Septin-like GTPase superfamily. EngA (Der) GTPase family. In terms of assembly, associates with the 50S ribosomal subunit.

In terms of biological role, GTPase that plays an essential role in the late steps of ribosome biogenesis. The polypeptide is GTPase Der (Acidovorax sp. (strain JS42)).